The following is a 77-amino-acid chain: Large ribosomal subunit protein eL14 (77 aa).

It belongs to the eukaryotic ribosomal protein eL14 family.

The polypeptide is Large ribosomal subunit protein eL14 (Methanococcus maripaludis (strain C6 / ATCC BAA-1332)).